Consider the following 171-residue polypeptide: Ribosome maturation factor RimM (171 aa).

The PRC barrel domain occupies 96 to 170; that stretch reads AEGEYYYHEI…LVTIHVMEGL (75 aa).

It belongs to the RimM family. Binds ribosomal protein uS19.

The protein resides in the cytoplasm. An accessory protein needed during the final step in the assembly of 30S ribosomal subunit, possibly for assembly of the head region. Essential for efficient processing of 16S rRNA. May be needed both before and after RbfA during the maturation of 16S rRNA. It has affinity for free ribosomal 30S subunits but not for 70S ribosomes. The polypeptide is Ribosome maturation factor RimM (Bacillus cereus (strain G9842)).